A 674-amino-acid polypeptide reads, in one-letter code: L-type lectin-domain containing receptor kinase SIT1 (674 aa).

The N-terminal stretch at 1-27 is a signal peptide; sequence MRRPELIMRSLPLILFLSLGSFHLAAA. Residues 28 to 301 are Extracellular-facing; it reads AVDDQFTFDG…IARAPSNVLK (274 aa). The segment at 31-275 is legume-lectin like; the sequence is DQFTFDGFAG…VLAWSFKMDG (245 aa). Asn-42, Asn-61, Asn-143, Asn-196, Asn-219, Asn-240, and Asn-281 each carry an N-linked (GlcNAc...) asparagine glycan. Residues 302 to 322 form a helical membrane-spanning segment; it reads ILLPIASAALVSALAIAVLVI. The Cytoplasmic portion of the chain corresponds to 323–674; it reads HRRRRRYAEL…GNISDIPRAR (352 aa). A Protein kinase domain is found at 357–636; the sequence is FSDERLLGFG…LDGAMPLPEL (280 aa). ATP is bound by residues 363-371 and Lys-386; that span reads LGFGGFGRV. Asp-482 acts as the Proton acceptor in catalysis. Phosphothreonine is present on residues Thr-511, Thr-515, Thr-516, and Thr-521.

It in the C-terminal section; belongs to the protein kinase superfamily. Ser/Thr protein kinase family. The protein in the N-terminal section; belongs to the leguminous lectin family. As to quaternary structure, interacts with B'KAPPA. Autophosphorylated at Thr-511, Thr-515 or Thr-516, and Thr-521 in response to salt stress. Dephosphorylated by phosphatase 2A in response to salt stress. As to expression, expressed in root epidermal cells.

It is found in the cell membrane. The enzyme catalyses L-seryl-[protein] + ATP = O-phospho-L-seryl-[protein] + ADP + H(+). The catalysed reaction is L-threonyl-[protein] + ATP = O-phospho-L-threonyl-[protein] + ADP + H(+). Its activity is regulated as follows. Activated by autophosphorylation in response to salt stress. Lectin-domain containing receptor kinase involved in salt stress response. Acts as a negative regulator of salt tolerance. Mediates salt sensitivity by phosphorylating and activating MPK3 and MPK6. Promotes ethylene production and mediates salt-induced ethylene signaling. Promotes the accumulation of reactive oxygen species (ROS) under salt stress conditions. Its kinase activity is triggered by salt stress and is required for its function in salt stress response. Phosphorylates B'KAPPA, a B regulatory subunit of phosphatase 2A (PP2A). The chain is L-type lectin-domain containing receptor kinase SIT1 from Oryza sativa subsp. japonica (Rice).